The sequence spans 525 residues: GMP synthase [glutamine-hydrolyzing] (525 aa).

The region spanning 9–207 is the Glutamine amidotransferase type-1 domain; that stretch reads RILILDFGSQ…VRDICQCEAL (199 aa). The active-site Nucleophile is the cysteine 86. Catalysis depends on residues histidine 181 and glutamate 183. Positions 208–400 constitute a GMPS ATP-PPase domain; the sequence is WTPAKIIDDA…LGLPYDMLYR (193 aa). Residue 235 to 241 participates in ATP binding; it reads SGGVDSS.

Homodimer.

It carries out the reaction XMP + L-glutamine + ATP + H2O = GMP + L-glutamate + AMP + diphosphate + 2 H(+). Its pathway is purine metabolism; GMP biosynthesis; GMP from XMP (L-Gln route): step 1/1. In terms of biological role, catalyzes the synthesis of GMP from XMP. This is GMP synthase [glutamine-hydrolyzing] from Enterobacter sp. (strain 638).